The sequence spans 291 residues: Beta-lactamase OXY-1 (291 aa).

The first 24 residues, 1 to 24 (MLKSSWRKTALMAAAAVPLLLASG), serve as a signal peptide directing secretion. The Acyl-ester intermediate role is filled by S73. Residue 237–239 (KTG) coordinates substrate.

The protein belongs to the class-A beta-lactamase family.

The enzyme catalyses a beta-lactam + H2O = a substituted beta-amino acid. Hydrolyzes broad-spectrum beta-lactam antibiotics. Active against cephalosporins. This Klebsiella oxytoca protein is Beta-lactamase OXY-1 (bla).